The chain runs to 556 residues: MQVTQEKRPGSRVGLKIVVEADRVKRSYEKTLRQLEQNIQIPGFRKGKAPRNLVVRQVGRERILASAVDDLINEAIQQAFKEAQLTPISRFELDDEVGQLLAQFNPEADFSFSGYVEVYPEARVGQYKGLTVTATRVDVKPEQIDQLIDRWRDQRATLLPVEDRPAQLGDVVVIDFAARDAEGNPLDEMTTQDFQLELKEDNFIPGFVAGIVGMQLDETKEIAATFPDDYFRKELAGKTVTFIVCLREIKAKELPELDDAFVQEISSFQTVAELREHLQKRLEQDALRQSEENLETAILNAILETTEVDLPETLIEQETTQLLAQSLQALRQEGIKPGELRKFLSELPPETLNQLKERHRPEAIDRLRRTLALSAIVRQEQIAVGSTELDVEVEEVMAAYAQQGQKLDRERVRQAVYESLLTNKVMAWLKSQTTVNWVDSEGNPTQAPTSLAGSEEKVEVPEAEFEADEPEAEVSGIPEAVESSSETATGAETDGEAAAAEAEPATEKAVEASPAETVSASAAEATLPVEEKAAETATEIPAAEKPKPSKKDKKGK.

The PPIase FKBP-type domain maps to 169–255; that stretch reads GDVVVIDFAA…LREIKAKELP (87 aa). Residues 438 to 452 are compositionally biased toward polar residues; that stretch reads VDSEGNPTQAPTSLA. The segment at 438–556 is disordered; it reads VDSEGNPTQA…KPSKKDKKGK (119 aa). Acidic residues predominate over residues 461–472; it reads PEAEFEADEPEA. Low complexity-rich tracts occupy residues 486-503 and 511-526; these read ETAT…AEAE and EASP…AEAT.

It belongs to the FKBP-type PPIase family. Tig subfamily.

Its subcellular location is the cytoplasm. It catalyses the reaction [protein]-peptidylproline (omega=180) = [protein]-peptidylproline (omega=0). In terms of biological role, involved in protein export. Acts as a chaperone by maintaining the newly synthesized protein in an open conformation. Functions as a peptidyl-prolyl cis-trans isomerase. This is Trigger factor from Synechococcus sp. (strain JA-2-3B'a(2-13)) (Cyanobacteria bacterium Yellowstone B-Prime).